Consider the following 281-residue polypeptide: Bifunctional protein FolD 1 (281 aa).

NADP(+) contacts are provided by residues 165–167 (GRS), serine 190, and isoleucine 231.

The protein belongs to the tetrahydrofolate dehydrogenase/cyclohydrolase family. Homodimer.

The enzyme catalyses (6R)-5,10-methylene-5,6,7,8-tetrahydrofolate + NADP(+) = (6R)-5,10-methenyltetrahydrofolate + NADPH. It catalyses the reaction (6R)-5,10-methenyltetrahydrofolate + H2O = (6R)-10-formyltetrahydrofolate + H(+). The protein operates within one-carbon metabolism; tetrahydrofolate interconversion. In terms of biological role, catalyzes the oxidation of 5,10-methylenetetrahydrofolate to 5,10-methenyltetrahydrofolate and then the hydrolysis of 5,10-methenyltetrahydrofolate to 10-formyltetrahydrofolate. The polypeptide is Bifunctional protein FolD 1 (Desulfitobacterium hafniense (strain Y51)).